The chain runs to 394 residues: Phosphopentomutase (394 aa).

Mn(2+) contacts are provided by Asp-13, Asp-286, His-291, Asp-327, His-328, and His-339.

This sequence belongs to the phosphopentomutase family. Requires Mn(2+) as cofactor.

The protein localises to the cytoplasm. It carries out the reaction 2-deoxy-alpha-D-ribose 1-phosphate = 2-deoxy-D-ribose 5-phosphate. The catalysed reaction is alpha-D-ribose 1-phosphate = D-ribose 5-phosphate. It functions in the pathway carbohydrate degradation; 2-deoxy-D-ribose 1-phosphate degradation; D-glyceraldehyde 3-phosphate and acetaldehyde from 2-deoxy-alpha-D-ribose 1-phosphate: step 1/2. In terms of biological role, isomerase that catalyzes the conversion of deoxy-ribose 1-phosphate (dRib-1-P) and ribose 1-phosphate (Rib-1-P) to deoxy-ribose 5-phosphate (dRib-5-P) and ribose 5-phosphate (Rib-5-P), respectively. The chain is Phosphopentomutase from Bacillus cereus (strain B4264).